The chain runs to 194 residues: Fe/S biogenesis protein NfuA (194 aa).

Residues Cys-152 and Cys-155 each coordinate [4Fe-4S] cluster.

It belongs to the NfuA family. In terms of assembly, homodimer. [4Fe-4S] cluster is required as a cofactor.

Functionally, involved in iron-sulfur cluster biogenesis. Binds a 4Fe-4S cluster, can transfer this cluster to apoproteins, and thereby intervenes in the maturation of Fe/S proteins. Could also act as a scaffold/chaperone for damaged Fe/S proteins. The chain is Fe/S biogenesis protein NfuA from Pseudomonas fluorescens (strain Pf0-1).